The chain runs to 72 residues: Beta-defensin 104 (72 aa).

Positions 1–22 (MQRLVLLLAISLLLYQDLPVRS) are cleaved as a signal peptide. Cystine bridges form between Cys30–Cys57, Cys37–Cys51, and Cys41–Cys58.

This sequence belongs to the beta-defensin family. High expression in the testis. Gastric antrum exhibited relatively high levels. A lower expression is observed in uterus and neutrophils thyroid gland, lung, and kidney. No detectable expression in other tissues tested.

It localises to the secreted. Its function is as follows. Has antimicrobial activity. Synergistic effects with lysozyme and DEFB103. The sequence is that of Beta-defensin 104 (DEFB104A) from Homo sapiens (Human).